The primary structure comprises 117 residues: Large ribosomal subunit protein uL24 (117 aa).

A compositionally biased stretch (basic residues) spans 1–10 (MSKQPRKQRK). Residues 1–28 (MSKQPRKQRKALYTAPLHKRHNSMSVHL) are disordered.

The protein belongs to the universal ribosomal protein uL24 family. As to quaternary structure, part of the 50S ribosomal subunit.

Functionally, one of two assembly initiator proteins, it binds directly to the 5'-end of the 23S rRNA, where it nucleates assembly of the 50S subunit. In terms of biological role, located at the polypeptide exit tunnel on the outside of the subunit. This is Large ribosomal subunit protein uL24 from Methanosphaera stadtmanae (strain ATCC 43021 / DSM 3091 / JCM 11832 / MCB-3).